The sequence spans 122 residues: Large ribosomal subunit protein uL14 (122 aa).

The protein belongs to the universal ribosomal protein uL14 family. As to quaternary structure, part of the 50S ribosomal subunit. Forms a cluster with proteins L3 and L19. In the 70S ribosome, L14 and L19 interact and together make contacts with the 16S rRNA in bridges B5 and B8.

In terms of biological role, binds to 23S rRNA. Forms part of two intersubunit bridges in the 70S ribosome. This Delftia acidovorans (strain DSM 14801 / SPH-1) protein is Large ribosomal subunit protein uL14.